Consider the following 236-residue polypeptide: Adenosine 5'-phosphosulfate reductase (236 aa).

[4Fe-4S] cluster is bound by residues cysteine 122, cysteine 123, cysteine 205, and cysteine 208. Residue cysteine 231 is the Nucleophile; cysteine thiosulfonate intermediate of the active site.

This sequence belongs to the PAPS reductase family. CysH subfamily. [4Fe-4S] cluster is required as a cofactor.

The protein localises to the cytoplasm. It catalyses the reaction [thioredoxin]-disulfide + sulfite + AMP + 2 H(+) = adenosine 5'-phosphosulfate + [thioredoxin]-dithiol. It participates in sulfur metabolism; hydrogen sulfide biosynthesis; sulfite from sulfate. Its function is as follows. Catalyzes the formation of sulfite from adenosine 5'-phosphosulfate (APS) using thioredoxin as an electron donor. This chain is Adenosine 5'-phosphosulfate reductase, found in Mycolicibacterium smegmatis (strain ATCC 700084 / mc(2)155) (Mycobacterium smegmatis).